The primary structure comprises 384 residues: Dual specificity protein phosphatase 9 (384 aa).

Ser16 bears the Phosphoserine mark. The Rhodanese domain occupies 18 to 139 (PRPRLLLLDC…FQAECPHLCE (122 aa)). A Tyrosine-protein phosphatase domain is found at 203 to 346 (FPVQILPNLY…LLDFERSLRL (144 aa)). The residue at position 262 (Ser262) is a Phosphoserine. The Phosphocysteine intermediate role is filled by Cys290. Positions 348–384 (ERHSQEQGSGGQASAASNPPSFFTTPTSDGAFELAPT) are disordered. Ser351 carries the post-translational modification Phosphoserine. The segment covering 359-375 (QASAASNPPSFFTTPTS) has biased composition (polar residues).

The protein belongs to the protein-tyrosine phosphatase family. Non-receptor class dual specificity subfamily.

It localises to the cytoplasm. The catalysed reaction is O-phospho-L-tyrosyl-[protein] + H2O = L-tyrosyl-[protein] + phosphate. The enzyme catalyses O-phospho-L-seryl-[protein] + H2O = L-seryl-[protein] + phosphate. It carries out the reaction O-phospho-L-threonyl-[protein] + H2O = L-threonyl-[protein] + phosphate. Functionally, inactivates MAP kinases. Has a specificity for the ERK family. In Homo sapiens (Human), this protein is Dual specificity protein phosphatase 9 (DUSP9).